We begin with the raw amino-acid sequence, 65 residues long: Large ribosomal subunit protein bL35 (65 aa).

A disordered region spans residues 1 to 22; that stretch reads MPKMKTKSSAKKRFKVTGSGKI.

The protein belongs to the bacterial ribosomal protein bL35 family.

The polypeptide is Large ribosomal subunit protein bL35 (Flavobacterium psychrophilum (strain ATCC 49511 / DSM 21280 / CIP 103535 / JIP02/86)).